The primary structure comprises 672 residues: Prion-like-(Q/N-rich) domain-bearing protein 25 (672 aa).

A helical transmembrane segment spans residues 26-46; the sequence is VPPPIMICLFFLLLQIFVISV.

The protein resides in the membrane. This Caenorhabditis elegans protein is Prion-like-(Q/N-rich) domain-bearing protein 25 (pqn-25).